The chain runs to 201 residues: Recombination protein RecR (201 aa).

Residues C57–C72 form a C4-type zinc finger. Residues G81–P176 form the Toprim domain.

The protein belongs to the RecR family.

In terms of biological role, may play a role in DNA repair. It seems to be involved in an RecBC-independent recombinational process of DNA repair. It may act with RecF and RecO. The chain is Recombination protein RecR from Escherichia coli O17:K52:H18 (strain UMN026 / ExPEC).